A 437-amino-acid chain; its full sequence is MNYPYIPHTDEDIRAMLEFIGVSSIEDLFSSIPVSARSSLNIPESRDEFSVFKRLKEISEVNASLEDYAVFLGAGVYKRYVPTVVYDLAMKPDFLTAYTPYQAEVSQGTLQALFEYQTMVCELTGMEVANASMYDGATALAEAALMSFRLTGKEKVVVARSVHPEYRAVLRTYLEKRGFTVVEAGYDETGRVLLEEVDEETAAIAIQYPNFFGIIEDLDYVRSRSGNALLIVVVEPVSLALLEPPGSYGADIVVGEGQSLGLPMWFGGYSLGIFATKEKYVRQMPGRLIGQTVDQDGSVTYTMILQTREQHIRRARATSNICSNHAHAALIAAVYMSVMGPDGLREVARRSYSAAHYLQERLEDMGFKLCFSGEFFSEFVFNVPEDYPERWKWMMAKKILGPLPLKGFYPELGDTALACATEVISKEDIEKLLEAMK.

Belongs to the GcvP family. N-terminal subunit subfamily. As to quaternary structure, the glycine cleavage system is composed of four proteins: P, T, L and H. In this organism, the P 'protein' is a heterodimer of two subunits.

The enzyme catalyses N(6)-[(R)-lipoyl]-L-lysyl-[glycine-cleavage complex H protein] + glycine + H(+) = N(6)-[(R)-S(8)-aminomethyldihydrolipoyl]-L-lysyl-[glycine-cleavage complex H protein] + CO2. Functionally, the glycine cleavage system catalyzes the degradation of glycine. The P protein binds the alpha-amino group of glycine through its pyridoxal phosphate cofactor; CO(2) is released and the remaining methylamine moiety is then transferred to the lipoamide cofactor of the H protein. The chain is Probable glycine dehydrogenase (decarboxylating) subunit 1 from Thermotoga petrophila (strain ATCC BAA-488 / DSM 13995 / JCM 10881 / RKU-1).